Reading from the N-terminus, the 694-residue chain is Maintenance of telomere capping protein 4 (694 aa).

The span at Met1–Glu12 shows a compositional bias: basic and acidic residues. The tract at residues Met1–Val26 is disordered. Residues Gln13 to Val26 are compositionally biased toward polar residues. Ser85 carries the post-translational modification Phosphoserine. A compositionally biased stretch (low complexity) spans Tyr211 to Ser222. 3 disordered regions span residues Tyr211–Gln287, Ala325–Tyr437, and Lys465–Leu511. A compositionally biased stretch (basic residues) spans Ser223–Val243. Positions Arg244 to Thr257 are enriched in polar residues. At Thr263 the chain carries Phosphothreonine. Residues Met276–Gln287 are compositionally biased toward polar residues. A compositionally biased stretch (low complexity) spans Ser403 to Ser417. Over residues Ile418–Tyr437 the composition is skewed to polar residues. A compositionally biased stretch (basic and acidic residues) spans Leu471–Leu485. 2 positions are modified to phosphoserine: Ser481 and Ser491. Position 493 is a phosphotyrosine (Tyr493). Residues Arg655–Leu675 traverse the membrane as a helical segment.

The protein resides in the membrane. It is found in the cytoplasm. The protein is Maintenance of telomere capping protein 4 (MTC4) of Saccharomyces cerevisiae (strain ATCC 204508 / S288c) (Baker's yeast).